A 355-amino-acid chain; its full sequence is D-alanine--D-alanine ligase (355 aa).

Positions Lys143–Asp350 constitute an ATP-grasp domain. Ile178–Glu233 provides a ligand contact to ATP. Mg(2+) is bound by residues Asp303, Glu317, and Asn319.

This sequence belongs to the D-alanine--D-alanine ligase family. The cofactor is Mg(2+). Mn(2+) is required as a cofactor.

It localises to the cytoplasm. It catalyses the reaction 2 D-alanine + ATP = D-alanyl-D-alanine + ADP + phosphate + H(+). It participates in cell wall biogenesis; peptidoglycan biosynthesis. Cell wall formation. The sequence is that of D-alanine--D-alanine ligase from Prochlorococcus marinus subsp. pastoris (strain CCMP1986 / NIES-2087 / MED4).